The chain runs to 406 residues: Succinylornithine transaminase (406 aa).

The residue at position 252 (Lys-252) is an N6-(pyridoxal phosphate)lysine.

This sequence belongs to the class-III pyridoxal-phosphate-dependent aminotransferase family. AstC subfamily. Pyridoxal 5'-phosphate serves as cofactor.

The enzyme catalyses N(2)-succinyl-L-ornithine + 2-oxoglutarate = N-succinyl-L-glutamate 5-semialdehyde + L-glutamate. Its pathway is amino-acid degradation; L-arginine degradation via AST pathway; L-glutamate and succinate from L-arginine: step 3/5. Its function is as follows. Catalyzes the transamination of N(2)-succinylornithine and alpha-ketoglutarate into N(2)-succinylglutamate semialdehyde and glutamate. Can also act as an acetylornithine aminotransferase. This chain is Succinylornithine transaminase, found in Citrobacter koseri (strain ATCC BAA-895 / CDC 4225-83 / SGSC4696).